Reading from the N-terminus, the 546-residue chain is Probable protein kinase UbiB (546 aa).

One can recognise a Protein kinase domain in the interval 123–501 (DFDETPLASA…SRRQGQARYL (379 aa)). ATP is bound by residues 129-137 (LASASIAQV) and K152. Residue D287 is the Proton acceptor of the active site. Helical transmembrane passes span 498–517 (ARYL…FLLT) and 522–541 (IEWG…LGWL).

It belongs to the ABC1 family. UbiB subfamily.

Its subcellular location is the cell inner membrane. It participates in cofactor biosynthesis; ubiquinone biosynthesis [regulation]. Is probably a protein kinase regulator of UbiI activity which is involved in aerobic coenzyme Q (ubiquinone) biosynthesis. The protein is Probable protein kinase UbiB of Aeromonas hydrophila subsp. hydrophila (strain ATCC 7966 / DSM 30187 / BCRC 13018 / CCUG 14551 / JCM 1027 / KCTC 2358 / NCIMB 9240 / NCTC 8049).